We begin with the raw amino-acid sequence, 49 residues long: Sporulation protein YjcZ (49 aa).

A helical membrane pass occupies residues 29 to 49 (STFVLLVVLFILLIIVGASFF).

It belongs to the SscA family.

It localises to the membrane. This chain is Sporulation protein YjcZ (yjcZ), found in Bacillus subtilis (strain 168).